The chain runs to 34 residues: Potassium channel toxin (34 aa).

Disulfide bonds link Cys-6-Cys-25, Cys-11-Cys-29, and Cys-15-Cys-31.

This sequence belongs to the short scorpion toxin superfamily. Potassium channel inhibitor family. Alpha-KTx 21 subfamily. In terms of tissue distribution, expressed by the venom gland.

Its subcellular location is the secreted. Functionally, toxin that blocks voltage-gated potassium channels (Kv). This is Potassium channel toxin from Tityus metuendus (Scorpion).